The chain runs to 611 residues: Alpha-1,2-mannosyltransferase ALG9 (611 aa).

A compositionally biased stretch (basic residues) spans 1 to 10; that stretch reads MASRGARQRL. Residues 1–23 are disordered; sequence MASRGARQRLKGSGASSGDTAPA. The Lumenal portion of the chain corresponds to 1–135; that stretch reads MASRGARQRL…FHARILQTNK (135 aa). N-linked (GlcNAc...) asparagine glycosylation is present at asparagine 77. The chain crosses the membrane as a helical span at residues 136 to 156; that stretch reads ILVFYFLRCLLAFVSCICELY. The Cytoplasmic portion of the chain corresponds to 157-171; sequence FYKAVCKKFGLHVSR. A helical transmembrane segment spans residues 172–192; that stretch reads MMLAFLVLSTGMFCSSSAFLP. The Lumenal portion of the chain corresponds to 193-213; the sequence is SSFCMYTTLIAMTGWYMDKTS. A helical membrane pass occupies residues 214–234; that stretch reads IAVLGVAAGAILGWPFSAALG. Residues 235–249 are Cytoplasmic-facing; that stretch reads LPIAFDLLVMKHRWK. Residues 250–270 form a helical membrane-spanning segment; that stretch reads SFFHWSLMALILFLVPVVVID. Residues 271–304 are Lumenal-facing; sequence SYYYGKLVIAPLNIVLYNVFTPHGPDLYGTEPWY. The chain crosses the membrane as a helical span at residues 305–325; the sequence is FYLINGFLNFNVAFALALLVL. The Cytoplasmic portion of the chain corresponds to 326-342; that stretch reads PLTSLMEYLLQRFHVQN. A helical transmembrane segment spans residues 343–363; the sequence is LGHPYWLTLAPMYIWFIIFFI. Over 364–370 the chain is Lumenal; that stretch reads QPHKEER. Residues 371-391 traverse the membrane as a helical segment; that stretch reads FLFPVYPLICLCGAVALSALQ. Residues 392–405 are Cytoplasmic-facing; sequence KCYHFVFQRYRLEH. The chain crosses the membrane as a helical span at residues 406-426; it reads YTVTSNWLALGTVFLFGLLSF. Topologically, residues 427–611 are lumenal; it reads SRSVALFRGY…AKQIRKKSGG (185 aa). Residue asparagine 593 is glycosylated (N-linked (GlcNAc...) asparagine).

The protein belongs to the glycosyltransferase 22 family. In terms of tissue distribution, ubiquitously expressed; with highest levels in heart, liver and pancreas.

The protein resides in the endoplasmic reticulum membrane. It carries out the reaction an alpha-D-Man-(1-&gt;2)-alpha-D-Man-(1-&gt;2)-alpha-D-Man-(1-&gt;3)-[alpha-D-Man-(1-&gt;3)-alpha-D-Man-(1-&gt;6)]-beta-D-Man-(1-&gt;4)-beta-D-GlcNAc-(1-&gt;4)-alpha-D-GlcNAc-diphospho-di-trans,poly-cis-dolichol + a di-trans,poly-cis-dolichyl beta-D-mannosyl phosphate = an alpha-D-Man-(1-&gt;2)-alpha-D-Man-(1-&gt;2)-alpha-D-Man-(1-&gt;3)-[alpha-D-Man-(1-&gt;2)-alpha-D-Man-(1-&gt;3)-alpha-D-Man-(1-&gt;6)]-beta-D-Man-(1-&gt;4)-beta-D-GlcNAc-(1-&gt;4)-alpha-D-GlcNAc-diphospho-di-trans,poly-cis-dolichol + a di-trans,poly-cis-dolichyl phosphate + H(+). It catalyses the reaction an alpha-D-Man-(1-&gt;2)-alpha-D-Man-(1-&gt;2)-alpha-D-Man-(1-&gt;3)-[alpha-D-Man-(1-&gt;2)-alpha-D-Man-(1-&gt;3)-[alpha-D-Man-(1-&gt;6)]-alpha-D-Man-(1-&gt;6)]-beta-D-Man-(1-&gt;4)-beta-D-GlcNAc-(1-&gt;4)-alpha-D-GlcNAc-diphospho-di-trans,poly-cis-dolichol + a di-trans,poly-cis-dolichyl beta-D-mannosyl phosphate = an alpha-D-Man-(1-&gt;2)-alpha-D-Man-(1-&gt;2)-alpha-D-Man-(1-&gt;3)-[alpha-D-Man-(1-&gt;2)-alpha-D-Man-(1-&gt;3)-[alpha-D-Man-(1-&gt;2)-alpha-D-Man-(1-&gt;6)]-alpha-D-Man-(1-&gt;6)]-beta-D-Man-(1-&gt;4)-beta-D-GlcNAc-(1-&gt;4)-alpha-D-GlcNAc-diphospho-di-trans,poly-cis-dolichol + a di-trans,poly-cis-dolichyl phosphate + H(+). It functions in the pathway protein modification; protein glycosylation. Functionally, mannosyltransferase that operates in the biosynthetic pathway of dolichol-linked oligosaccharides, the glycan precursors employed in protein asparagine (N)-glycosylation. The assembly of dolichol-linked oligosaccharides begins on the cytosolic side of the endoplasmic reticulum membrane and finishes in its lumen. The sequential addition of sugars to dolichol pyrophosphate produces dolichol-linked oligosaccharides containing fourteen sugars, including two GlcNAcs, nine mannoses and three glucoses. Once assembled, the oligosaccharide is transferred from the lipid to nascent proteins by oligosaccharyltransferases. In the lumen of the endoplasmic reticulum, catalyzes the addition of the seventh and ninth alpha-1,2-linked mannose residues to Man(6)GlcNAc(2)-PP-dolichol and Man(8)GlcNAc(2)-PP-dolichol respectively. The protein is Alpha-1,2-mannosyltransferase ALG9 of Homo sapiens (Human).